Reading from the N-terminus, the 229-residue chain is Large ribosomal subunit protein uL4 (229 aa).

A disordered region spans residues 62–103 (SRRQGTHQVKNRAAVSGSGKKPWKQKGTGRARHSSRRSPIWV). Residues 82 to 97 (KPWKQKGTGRARHSSR) are compositionally biased toward basic residues.

It belongs to the universal ribosomal protein uL4 family. Part of the 50S ribosomal subunit.

Its function is as follows. One of the primary rRNA binding proteins, this protein initially binds near the 5'-end of the 23S rRNA. It is important during the early stages of 50S assembly. It makes multiple contacts with different domains of the 23S rRNA in the assembled 50S subunit and ribosome. In terms of biological role, forms part of the polypeptide exit tunnel. This is Large ribosomal subunit protein uL4 from Mycoplasmopsis synoviae (strain 53) (Mycoplasma synoviae).